Reading from the N-terminus, the 1183-residue chain is Probable RNA-dependent RNA polymerase 4 (1183 aa).

The protein belongs to the RdRP family. In terms of tissue distribution, expressed in shoot apical meristem (SAM) and panicles.

The enzyme catalyses RNA(n) + a ribonucleoside 5'-triphosphate = RNA(n+1) + diphosphate. Probably involved in the RNA silencing pathway and required for the generation of small interfering RNAs (siRNAs). This Oryza sativa subsp. japonica (Rice) protein is Probable RNA-dependent RNA polymerase 4 (RDR4).